The following is a 233-amino-acid chain: Purine nucleoside phosphorylase DeoD-type (233 aa).

His4 contributes to the a purine D-ribonucleoside binding site. Residues Gly20, Arg24, Arg43, and 87–90 (RVGT) each bind phosphate. Residues 179–181 (EME) and 203–204 (SD) each bind a purine D-ribonucleoside. Asp204 serves as the catalytic Proton donor.

It belongs to the PNP/UDP phosphorylase family. In terms of assembly, homohexamer; trimer of homodimers.

The enzyme catalyses a purine D-ribonucleoside + phosphate = a purine nucleobase + alpha-D-ribose 1-phosphate. The catalysed reaction is a purine 2'-deoxy-D-ribonucleoside + phosphate = a purine nucleobase + 2-deoxy-alpha-D-ribose 1-phosphate. Functionally, catalyzes the reversible phosphorolytic breakdown of the N-glycosidic bond in the beta-(deoxy)ribonucleoside molecules, with the formation of the corresponding free purine bases and pentose-1-phosphate. This Clostridium novyi (strain NT) protein is Purine nucleoside phosphorylase DeoD-type.